The sequence spans 74 residues: Defensin-like protein P322 (74 aa).

Residues 1 to 19 (MRFFATFFLLAMLVVATKM) form the signal peptide. 4 cysteine pairs are disulfide-bonded: Cys30-Cys74, Cys41-Cys61, Cys47-Cys68, and Cys51-Cys70.

It belongs to the DEFL family. Protease inhibitor I18 (RTI/MTI-2) subfamily. As to expression, tuber.

The protein localises to the secreted. The polypeptide is Defensin-like protein P322 (Solanum tuberosum (Potato)).